We begin with the raw amino-acid sequence, 150 residues long: Large ribosomal subunit protein bL9 (150 aa).

It belongs to the bacterial ribosomal protein bL9 family.

Binds to the 23S rRNA. The polypeptide is Large ribosomal subunit protein bL9 (Burkholderia mallei (strain NCTC 10247)).